Here is a 190-residue protein sequence, read N- to C-terminus: Imidazoleglycerol-phosphate dehydratase (190 aa).

Belongs to the imidazoleglycerol-phosphate dehydratase family.

It is found in the cytoplasm. The enzyme catalyses D-erythro-1-(imidazol-4-yl)glycerol 3-phosphate = 3-(imidazol-4-yl)-2-oxopropyl phosphate + H2O. It functions in the pathway amino-acid biosynthesis; L-histidine biosynthesis; L-histidine from 5-phospho-alpha-D-ribose 1-diphosphate: step 6/9. The polypeptide is Imidazoleglycerol-phosphate dehydratase (Methanococcus maripaludis (strain C7 / ATCC BAA-1331)).